The chain runs to 210 residues: Ribosomal RNA small subunit methyltransferase G (210 aa).

S-adenosyl-L-methionine contacts are provided by residues Gly77, Phe82, 100–102 (ERS), 128–129 (VE), and Arg141.

It belongs to the methyltransferase superfamily. RNA methyltransferase RsmG family.

It localises to the cytoplasm. Functionally, specifically methylates the N7 position of a guanine in 16S rRNA. This chain is Ribosomal RNA small subunit methyltransferase G, found in Borrelia recurrentis (strain A1).